The chain runs to 400 residues: Elongation factor Tu (400 aa).

The region spanning Lys-10–Gln-208 is the tr-type G domain. The interval Gly-19–Ser-26 is G1. Gly-19–Ser-26 serves as a coordination point for GTP. Ser-26 provides a ligand contact to Mg(2+). The interval Gly-60 to Asn-64 is G2. The tract at residues Asp-81–Gly-84 is G3. Residues Asp-81–His-85 and Asn-136–Asp-139 contribute to the GTP site. Positions Asn-136–Asp-139 are G4. A G5 region spans residues Ser-174–Leu-176.

The protein belongs to the TRAFAC class translation factor GTPase superfamily. Classic translation factor GTPase family. EF-Tu/EF-1A subfamily. Monomer.

The protein resides in the cytoplasm. The enzyme catalyses GTP + H2O = GDP + phosphate + H(+). Its function is as follows. GTP hydrolase that promotes the GTP-dependent binding of aminoacyl-tRNA to the A-site of ribosomes during protein biosynthesis. In Thermotoga petrophila (strain ATCC BAA-488 / DSM 13995 / JCM 10881 / RKU-1), this protein is Elongation factor Tu.